The chain runs to 493 residues: 11S globulin seed storage protein G3 (493 aa).

An N-terminal signal peptide occupies residues 1-20 (MASKATLLLAFTLLFATCIA). 2 disulfide bridges follow: cysteine 32/cysteine 65 and cysteine 103/cysteine 312. Residues 37 to 248 (IEALEPIEVI…SFNVDQETAQ (212 aa)) enclose the Cupin type-1 1 domain. Disordered stretches follow at residues 190–229 (PQAQ…NIFN) and 269–305 (IVRP…GWSN). Low complexity-rich tracts occupy residues 191–221 (QAQA…QGQG) and 280–298 (RQQQ…QQQG). The Cupin type-1 2 domain occupies 318-467 (VNIDNPSQAD…RYQLSREEAQ (150 aa)).

It belongs to the 11S seed storage protein (globulins) family. Hexamer; each subunit is composed of an acidic and a basic chain derived from a single precursor and linked by a disulfide bond.

This is a seed storage protein. The polypeptide is 11S globulin seed storage protein G3 (HAG3) (Helianthus annuus (Common sunflower)).